A 156-amino-acid chain; its full sequence is Arginine repressor (156 aa).

It belongs to the ArgR family.

The protein resides in the cytoplasm. It participates in amino-acid biosynthesis; L-arginine biosynthesis [regulation]. Functionally, regulates arginine biosynthesis genes. The sequence is that of Arginine repressor from Shigella boydii serotype 18 (strain CDC 3083-94 / BS512).